Reading from the N-terminus, the 432-residue chain is D-amino acid dehydrogenase (432 aa).

Residue 3-17 (VVILGSGVVGVASAW) coordinates FAD.

Belongs to the DadA oxidoreductase family. Requires FAD as cofactor.

The catalysed reaction is a D-alpha-amino acid + A + H2O = a 2-oxocarboxylate + AH2 + NH4(+). It functions in the pathway amino-acid degradation; D-alanine degradation; NH(3) and pyruvate from D-alanine: step 1/1. Its function is as follows. Oxidative deamination of D-amino acids. The protein is D-amino acid dehydrogenase of Shigella boydii serotype 4 (strain Sb227).